A 150-amino-acid polypeptide reads, in one-letter code: Macrodomain Ter protein (150 aa).

Belongs to the MatP family. In terms of assembly, homodimer.

It is found in the cytoplasm. Required for spatial organization of the terminus region of the chromosome (Ter macrodomain) during the cell cycle. Prevents early segregation of duplicated Ter macrodomains during cell division. Binds specifically to matS, which is a 13 bp signature motif repeated within the Ter macrodomain. This is Macrodomain Ter protein from Salmonella arizonae (strain ATCC BAA-731 / CDC346-86 / RSK2980).